The following is a 368-amino-acid chain: Spermidine/putrescine import ATP-binding protein PotA (368 aa).

The ABC transporter domain occupies 6 to 236; that stretch reads VSIKNVSKFF…PVNVFAATFI (231 aa). Residue 38–45 coordinates ATP; it reads GPSGCGKT.

It belongs to the ABC transporter superfamily. Spermidine/putrescine importer (TC 3.A.1.11.1) family. In terms of assembly, the complex is composed of two ATP-binding proteins (PotA), two transmembrane proteins (PotB and PotC) and a solute-binding protein (PotD).

It is found in the cell inner membrane. The catalysed reaction is ATP + H2O + polyamine-[polyamine-binding protein]Side 1 = ADP + phosphate + polyamineSide 2 + [polyamine-binding protein]Side 1.. Part of the ABC transporter complex PotABCD involved in spermidine/putrescine import. Responsible for energy coupling to the transport system. The polypeptide is Spermidine/putrescine import ATP-binding protein PotA (Thermotoga maritima (strain ATCC 43589 / DSM 3109 / JCM 10099 / NBRC 100826 / MSB8)).